Consider the following 310-residue polypeptide: Hydroxyacylglutathione hydrolase, mitochondrial (310 aa).

6 residues coordinate Zn(2+): H104, H106, D108, H109, H160, and D184. Substrate contacts are provided by residues 193–195, 223–225, and 299–302; these read KFF, HEY, and RKEK. Position 223 (H223) interacts with Zn(2+).

Belongs to the metallo-beta-lactamase superfamily. Glyoxalase II family. In terms of assembly, monomer. Zn(2+) is required as a cofactor.

Its subcellular location is the mitochondrion matrix. It is found in the cytoplasm. It carries out the reaction an S-(2-hydroxyacyl)glutathione + H2O = a 2-hydroxy carboxylate + glutathione + H(+). It catalyses the reaction (R)-S-lactoylglutathione + H2O = (R)-lactate + glutathione + H(+). Its function is as follows. Thiolesterase that catalyzes the hydrolysis of S-D-lactoyl-glutathione to form glutathione and D-lactic acid. This chain is Hydroxyacylglutathione hydrolase, mitochondrial (HAGH), found in Gallus gallus (Chicken).